Consider the following 142-residue polypeptide: Centromere protein S (142 aa).

The segment at 107-142 (LKGKAKKKRKPEDESRSSRESMAEELDGAEELQSES) is disordered. Residues 116–128 (KPEDESRSSRESM) show a composition bias toward basic and acidic residues. A compositionally biased stretch (acidic residues) spans 129–142 (AEELDGAEELQSES).

Belongs to the TAF9 family. CENP-S/MHF1 subfamily. Heterodimer with CENPX, sometimes called MHF; this interaction stabilizes both partners. MHF heterodimers can assemble to form tetrameric structures. MHF also coassemble with CENPT-CENPW heterodimers at centromeres to form the tetrameric CENP-T-W-S-X complex. Forms a discrete complex with FANCM and CENPX, called FANCM-MHF; this interaction, probably mediated by direct binding between CENPS and FANCM, leads to synergistic activation of double-stranded DNA binding and strongly stimulates FANCM-mediated DNA remodeling. Recruited by FANCM to the Fanconi anemia (FA) core complex, which consists of CENPS, CENPX, FANCA, FANCB, FANCC, FANCE, FANCF, FANCG, FANCL, FANCM, FAAP24 and FAAP100. The FA core complex associates with Bloom syndrome (BLM) complex, which consists of at least BLM, DNA topoisomerase 3-alpha (TOP3A), RMI1/BLAP75, RPA1/RPA70 and RPA2/RPA32. The super complex between FA and BLM is called BRAFT. Component of the CENPA-CAD complex, composed of CENPI, CENPK, CENPL, CENPO, CENPP, CENPQ, CENPR and CENPS. The CENPA-CAD complex is probably recruited on centromeres by the CENPA-NAC complex, at least composed of CENPA, CENPC, CENPH, CENPM, CENPN, CENPT and CENPU.

The protein localises to the nucleus. It localises to the chromosome. It is found in the centromere. Its subcellular location is the kinetochore. In terms of biological role, DNA-binding component of the Fanconi anemia (FA) core complex. Required for the normal activation of the FA pathway, leading to monoubiquitination of the FANCI-FANCD2 complex in response to DNA damage, cellular resistance to DNA cross-linking drugs, and prevention of chromosomal breakage. In complex with CENPX (MHF heterodimer), crucial cofactor for FANCM in both binding and ATP-dependent remodeling of DNA. Stabilizes FANCM. In complex with CENPX and FANCM (but not other FANC proteins), rapidly recruited to blocked forks and promotes gene conversion at blocked replication forks. In complex with CENPT, CENPW and CENPX (CENP-T-W-S-X heterotetramer), involved in the formation of a functional kinetochore outer plate, which is essential for kinetochore-microtubule attachment and faithful mitotic progression. As a component of MHF and CENP-T-W-S-X complexes, binds DNA and bends it to form a nucleosome-like structure. DNA-binding function is fulfilled in the presence of CENPX, with the following preference for DNA substates: Holliday junction &gt; double-stranded &gt; splay arm &gt; single-stranded. Does not bind DNA on its own. This Mus musculus (Mouse) protein is Centromere protein S (Cenps).